A 198-amino-acid chain; its full sequence is Ribonuclease HII (198 aa).

The RNase H type-2 domain maps to 9–198; sequence ITVAGADEAG…LLPDQLKIDF (190 aa). A divalent metal cation-binding residues include aspartate 15, glutamate 16, and aspartate 107.

This sequence belongs to the RNase HII family. Requires Mn(2+) as cofactor. Mg(2+) is required as a cofactor.

The protein resides in the cytoplasm. The catalysed reaction is Endonucleolytic cleavage to 5'-phosphomonoester.. In terms of biological role, endonuclease that specifically degrades the RNA of RNA-DNA hybrids. The sequence is that of Ribonuclease HII from Christiangramia forsetii (strain DSM 17595 / CGMCC 1.15422 / KT0803) (Gramella forsetii).